A 917-amino-acid chain; its full sequence is Spermatogenesis-associated protein 31D4 (917 aa).

Residues 29 to 49 form a helical membrane-spanning segment; sequence FICLSGLGLFILYLFYMVLTL. 3 disordered regions span residues 55–80, 152–195, and 773–798; these read EKNNDTQKHQGRARRKRKSVTFKDRK, SVSP…PPPL, and SQETAPKNHLLHDPETSSDEDLRSNS. Residues 63–74 are compositionally biased toward basic residues; that stretch reads HQGRARRKRKSV. The segment covering 152-163 has biased composition (low complexity); the sequence is SVSPLASSASGA. Positions 164–177 are enriched in polar residues; sequence ESSFTLASTPSATT. Residues 782–798 are compositionally biased toward basic and acidic residues; it reads LLHDPETSSDEDLRSNS.

Belongs to the SPATA31 family.

Its subcellular location is the membrane. Its function is as follows. May play a role in spermatogenesis. In Homo sapiens (Human), this protein is Spermatogenesis-associated protein 31D4 (SPATA31D4).